The sequence spans 536 residues: Zinc finger CCCH domain-containing protein 18 (536 aa).

The segment at 156 to 183 (EFPVKICHYFNKGFCKHGNNCRYFHGQI) adopts a C3H1-type zinc-finger fold. Residues 211-294 (SLEKLEGEII…HGQHSVILAE (84 aa)) form the HTH OST-type domain. The RRM domain maps to 317–392 (RQIYLTFPAE…ARVLVKPYRE (76 aa)).

Functionally, possesses ribonuclease activity in vitro. In Arabidopsis thaliana (Mouse-ear cress), this protein is Zinc finger CCCH domain-containing protein 18.